Reading from the N-terminus, the 614-residue chain is Zinc finger protein 276 (614 aa).

The interval 1 to 50 (MKRDRLGRFLSPGSSRQCGASDGGGGVSRTRGRPSLSGGPRVDGATARRA) is disordered. Residues 77-163 (GHCRLCHGKF…LQRVNASPAG (87 aa)) form the ZAD domain. Positions 79, 82, 136, and 139 each coordinate Zn(2+). Residues 268 to 420 (APRLPQHRGW…KKPGPKPGWK (153 aa)) are disordered. Residues 357 to 369 (SDLSEGDVLSEDE) are compositionally biased toward acidic residues. Residues 386–408 (YPERKVSGKKSESKEAKKSEEPR) show a composition bias toward basic and acidic residues. A compositionally biased stretch (basic residues) spans 409-420 (IRKKPGPKPGWK). 5 C2H2-type zinc fingers span residues 434-458 (YKCP…IKEH), 465-490 (RPCP…KLIH), 496-518 (YICD…QMRH), 524-546 (LQCE…MTKH), and 554-577 (FACD…SMVH). The disordered stretch occupies residues 583–614 (QDKALPLEAEPPPGPPSPSVTTEGQAVKPEPT). A compositionally biased stretch (pro residues) spans 591–600 (AEPPPGPPSP).

It localises to the nucleus. The protein resides in the chromosome. It is found in the centromere. Its subcellular location is the kinetochore. May be involved in transcriptional regulation. This Homo sapiens (Human) protein is Zinc finger protein 276 (ZNF276).